Consider the following 311-residue polypeptide: Methionyl-tRNA formyltransferase (311 aa).

Residue Ser-114 to Pro-117 participates in (6S)-5,6,7,8-tetrahydrofolate binding.

This sequence belongs to the Fmt family.

It carries out the reaction L-methionyl-tRNA(fMet) + (6R)-10-formyltetrahydrofolate = N-formyl-L-methionyl-tRNA(fMet) + (6S)-5,6,7,8-tetrahydrofolate + H(+). Functionally, attaches a formyl group to the free amino group of methionyl-tRNA(fMet). The formyl group appears to play a dual role in the initiator identity of N-formylmethionyl-tRNA by promoting its recognition by IF2 and preventing the misappropriation of this tRNA by the elongation apparatus. The protein is Methionyl-tRNA formyltransferase of Corynebacterium diphtheriae (strain ATCC 700971 / NCTC 13129 / Biotype gravis).